We begin with the raw amino-acid sequence, 622 residues long: 1-deoxy-D-xylulose-5-phosphate synthase (622 aa).

Thiamine diphosphate-binding positions include His-80 and 121–123 (GHS). Residue Asp-152 participates in Mg(2+) binding. Thiamine diphosphate-binding positions include 153-154 (GA), Asn-181, Tyr-288, and Glu-369. Mg(2+) is bound at residue Asn-181.

This sequence belongs to the transketolase family. DXPS subfamily. As to quaternary structure, homodimer. Requires Mg(2+) as cofactor. The cofactor is thiamine diphosphate.

It catalyses the reaction D-glyceraldehyde 3-phosphate + pyruvate + H(+) = 1-deoxy-D-xylulose 5-phosphate + CO2. Its pathway is metabolic intermediate biosynthesis; 1-deoxy-D-xylulose 5-phosphate biosynthesis; 1-deoxy-D-xylulose 5-phosphate from D-glyceraldehyde 3-phosphate and pyruvate: step 1/1. Catalyzes the acyloin condensation reaction between C atoms 2 and 3 of pyruvate and glyceraldehyde 3-phosphate to yield 1-deoxy-D-xylulose-5-phosphate (DXP). The protein is 1-deoxy-D-xylulose-5-phosphate synthase of Psychromonas ingrahamii (strain DSM 17664 / CCUG 51855 / 37).